The following is a 398-amino-acid chain: 1-deoxy-D-xylulose 5-phosphate reductoisomerase (398 aa).

NADPH is bound by residues threonine 21, glycine 22, serine 23, isoleucine 24, glycine 47, asparagine 50, and asparagine 127. 1-deoxy-D-xylulose 5-phosphate is bound at residue lysine 128. Glutamate 129 contacts NADPH. Position 151 (aspartate 151) interacts with Mn(2+). Positions 152, 153, 177, and 200 each coordinate 1-deoxy-D-xylulose 5-phosphate. Glutamate 153 is a binding site for Mn(2+). Glycine 206 contributes to the NADPH binding site. The 1-deoxy-D-xylulose 5-phosphate site is built by serine 213, asparagine 218, lysine 219, and glutamate 222. Glutamate 222 serves as a coordination point for Mn(2+).

This sequence belongs to the DXR family. Mg(2+) serves as cofactor. Mn(2+) is required as a cofactor.

The enzyme catalyses 2-C-methyl-D-erythritol 4-phosphate + NADP(+) = 1-deoxy-D-xylulose 5-phosphate + NADPH + H(+). The protein operates within isoprenoid biosynthesis; isopentenyl diphosphate biosynthesis via DXP pathway; isopentenyl diphosphate from 1-deoxy-D-xylulose 5-phosphate: step 1/6. Functionally, catalyzes the NADPH-dependent rearrangement and reduction of 1-deoxy-D-xylulose-5-phosphate (DXP) to 2-C-methyl-D-erythritol 4-phosphate (MEP). This chain is 1-deoxy-D-xylulose 5-phosphate reductoisomerase, found in Mycolicibacterium smegmatis (strain ATCC 700084 / mc(2)155) (Mycobacterium smegmatis).